A 1042-amino-acid chain; its full sequence is MAVSCTPTLGLSSAPDEIQHPHIKFSEWKFKLFRVRSFEKTTEENQKEKNSSEGKPSLEQSPAVLDKASGQKPEVAPPAFKVHPKFSKKFHDDGKARDKAIHQANLRHLCRICGNSLKTDEHNRRYPVHGPVDSKTQGLLRKKEKKATSWPDLIAKVFRIDVKTDVDSIHPTEFCHNCWRIMHRKFSGAPCEVYFPRNATMEWHPHAPSCDICYTARRGLKRRNHQPNVQLSKKLKTVLDQARQARQRKRRVQARITSKEVMKMIANCSKIHLSTKLLAVDFPAHFVKSISCQICEHILADPVETSCKHVFCRICILRCLKVMGSYCPSCQYPCFPTDLESPVKSFLCILNSLIVKCSAPECNEEVSLEKYNHHVSSHKESRDTFVHINKGGRPRQHLLSLTRRAQKHRLRELKLQVKAFADKEEGGDVKSVCLTLFLLALRARNEHRQADELEAIMQGRGSGLQPAVCLAIRVNTFLSCSQYHKMYRTVKAITGRQIFQPLHALRNAEKVLLPGYHPFEWQPPLKNVSSSTDVGIIDGLSGLSSSVDDYPVDTIAKRFRYDSALVSALMDMEEDILEGMRSQDLEDYLNGPFTVVVKESCDGMGDVTEKHGSGPAVPEKAVRFSFTVMKITIAHGSQNVKVFEEAKPNSELCCKPLCLMLADESDHETLTAILSPLIAEREAMKSSELMLEMGGILRTFKFIFRGTGYDEKLVREVEGLEASGSVYICTLCDATRLEASQNLVFHSITRSHAENLERYEVWRSNPYHESVEELRDRVKGVSAKPFIETVPSIDALHCDIGNAAEFYKIFQLEIGEVYKNPSASKEERKRWQATLDKHLRKKMNLKPIMRMNGNFARKLMTIETVEAVCELIPSKERHEALRELMELYLKMKPVWRSSCPAKECPESLCQYSFNSQRFAELLSTKFKYRYEGKITNYFHKTLAHVPEIIERDGSIGAWASEGNESGNKLFRRFRKMNARQSKCYEMEDVLKHHWLYTSKYLQKFMNAHNAVKNSGFTMNSQVSLEDPLGIEDSLESQYSMEF.

Over residues 40 to 52 (KTTEENQKEKNSS) the composition is skewed to basic and acidic residues. The interval 40–80 (KTTEENQKEKNSSEGKPSLEQSPAVLDKASGQKPEVAPPAF) is disordered. K233 participates in a covalent cross-link: Glycyl lysine isopeptide (Lys-Gly) (interchain with G-Cter in ubiquitin). Residues C268, H272, C292, C295, H297, C307, H309, C312, C315, C327, C330, C357, C362, H374, and H378 each contribute to the Zn(2+) site. Residues 292-331 (CQICEHILADPVETSCKHVFCRICILRCLKVMGSYCPSCQ) form an RING-type zinc finger. The RAG1-type zinc-finger motif lies at 353–382 (LIVKCSAPECNEEVSLEKYNHHVSSHKESR). Positions 391–458 (GGRPRQHLLS…QADELEAIMQ (68 aa)) form a DNA-binding region, NBD. A divalent metal cation-binding residues include D602, D710, and E964.

The protein belongs to the RAG1 family. In terms of assembly, homodimer. Component of the RAG complex composed of core components RAG1 and RAG2, and associated component HMGB1 or HMGB2. Interacts with DCAF1, leading to recruitment of the CUL4A-RBX1-DDB1-DCAF1/VPRBP complex to ubiquitinate proteins and limit error-prone repair during V(D)J recombination. Requires Mg(2+) as cofactor. Mn(2+) serves as cofactor. Autoubiquitinated in the presence of CDC34/UBCH3.

The protein resides in the nucleus. It catalyses the reaction S-ubiquitinyl-[E2 ubiquitin-conjugating enzyme]-L-cysteine + [acceptor protein]-L-lysine = [E2 ubiquitin-conjugating enzyme]-L-cysteine + N(6)-ubiquitinyl-[acceptor protein]-L-lysine.. Its function is as follows. Catalytic component of the RAG complex, a multiprotein complex that mediates the DNA cleavage phase during V(D)J recombination. V(D)J recombination assembles a diverse repertoire of immunoglobulin and T-cell receptor genes in developing B and T-lymphocytes through rearrangement of different V (variable), in some cases D (diversity), and J (joining) gene segments. In the RAG complex, RAG1 mediates the DNA-binding to the conserved recombination signal sequences (RSS) and catalyzes the DNA cleavage activities by introducing a double-strand break between the RSS and the adjacent coding segment. RAG2 is not a catalytic component but is required for all known catalytic activities. DNA cleavage occurs in 2 steps: a first nick is introduced in the top strand immediately upstream of the heptamer, generating a 3'-hydroxyl group that can attack the phosphodiester bond on the opposite strand in a direct transesterification reaction, thereby creating 4 DNA ends: 2 hairpin coding ends and 2 blunt, 5'-phosphorylated ends. The chromatin structure plays an essential role in the V(D)J recombination reactions and the presence of histone H3 trimethylated at 'Lys-4' (H3K4me3) stimulates both the nicking and haipinning steps. The RAG complex also plays a role in pre-B cell allelic exclusion, a process leading to expression of a single immunoglobulin heavy chain allele to enforce clonality and monospecific recognition by the B-cell antigen receptor (BCR) expressed on individual B-lymphocytes. The introduction of DNA breaks by the RAG complex on one immunoglobulin allele induces ATM-dependent repositioning of the other allele to pericentromeric heterochromatin, preventing accessibility to the RAG complex and recombination of the second allele. In addition to its endonuclease activity, RAG1 also acts as an E3 ubiquitin-protein ligase that mediates monoubiquitination of histone H3. Histone H3 monoubiquitination is required for the joining step of V(D)J recombination. Mediates polyubiquitination of KPNA1. This Oryctolagus cuniculus (Rabbit) protein is V(D)J recombination-activating protein 1 (RAG1).